The primary structure comprises 81 residues: CLAVATA3/ESR (CLE)-related protein 12 (81 aa).

Positions 1-31 are cleaved as a signal peptide; it reads MENSNKVPISKIGLIMLMIFSTFFMSPHARR. The span at 55–67 shows a compositional bias: basic and acidic residues; the sequence is KRSRTDLEDKAVP. Residues 55-81 form a disordered region; it reads KRSRTDLEDKAVPGDRLSPGGPNHIHN. Hydroxyproline occurs at positions 73 and 76. A glycan (O-linked (Ara...) hydroxyproline) is linked at Pro-76.

Belongs to the CLV3/ESR signal peptide family. Post-translationally, the O-glycosylation (arabinosylation) of the hydroxyproline Pro-76 enhances binding affinity of the CLE12p peptide for its receptor. In terms of tissue distribution, expressed in young nodules throughout the central tissue. Expressed in the apical region of elongated nodules, corresponding to the meristematic and early infection zones.

The protein resides in the secreted. It is found in the extracellular space. Signaling peptide involved in the regulation of nodulation. Moves from root to shoot to function with the receptor kinase SUNN, in a signaling pathway that plays roles during cellular differentiation, both at the onset of nodulation, and later during nodule meristem development and subsequent homeostasis. Interacts with SUNN signaling to control nodule numbers. SUNN is involved in the autoregulation of nodulation (AON), a long distance systemic signaling from root to shoot and back again, which allows legumes to limit the number of root nodules formed based on available nitrogen and previous rhizobial colonization. In Medicago truncatula (Barrel medic), this protein is CLAVATA3/ESR (CLE)-related protein 12.